The sequence spans 428 residues: Serine--tRNA ligase (428 aa).

L-serine is bound at residue 231–233 (TAE). 262–264 (RAE) provides a ligand contact to ATP. Glu285 is an L-serine binding site. An ATP-binding site is contributed by 349–352 (EISS). Ser385 provides a ligand contact to L-serine.

The protein belongs to the class-II aminoacyl-tRNA synthetase family. Type-1 seryl-tRNA synthetase subfamily. In terms of assembly, homodimer. The tRNA molecule binds across the dimer.

Its subcellular location is the cytoplasm. It catalyses the reaction tRNA(Ser) + L-serine + ATP = L-seryl-tRNA(Ser) + AMP + diphosphate + H(+). The catalysed reaction is tRNA(Sec) + L-serine + ATP = L-seryl-tRNA(Sec) + AMP + diphosphate + H(+). The protein operates within aminoacyl-tRNA biosynthesis; selenocysteinyl-tRNA(Sec) biosynthesis; L-seryl-tRNA(Sec) from L-serine and tRNA(Sec): step 1/1. Catalyzes the attachment of serine to tRNA(Ser). Is also able to aminoacylate tRNA(Sec) with serine, to form the misacylated tRNA L-seryl-tRNA(Sec), which will be further converted into selenocysteinyl-tRNA(Sec). The sequence is that of Serine--tRNA ligase from Methylorubrum extorquens (strain CM4 / NCIMB 13688) (Methylobacterium extorquens).